Reading from the N-terminus, the 485-residue chain is ATP-dependent protease ATPase subunit HslU (485 aa).

ATP-binding positions include isoleucine 22 and 64 to 69 (GVGKTE). Positions 146-189 (KKTAATSAQPQDVSQASSGTTISLPSVSSTAQAEEHKAQNENDM) are disordered. A compositionally biased stretch (polar residues) spans 149-177 (AATSAQPQDVSQASSGTTISLPSVSSTAQ). Residues 178–189 (AEEHKAQNENDM) are compositionally biased toward basic and acidic residues. ATP is bound by residues aspartate 297, glutamate 363, and arginine 435.

Belongs to the ClpX chaperone family. HslU subfamily. In terms of assembly, a double ring-shaped homohexamer of HslV is capped on each side by a ring-shaped HslU homohexamer. The assembly of the HslU/HslV complex is dependent on binding of ATP.

It localises to the cytoplasm. Its function is as follows. ATPase subunit of a proteasome-like degradation complex; this subunit has chaperone activity. The binding of ATP and its subsequent hydrolysis by HslU are essential for unfolding of protein substrates subsequently hydrolyzed by HslV. HslU recognizes the N-terminal part of its protein substrates and unfolds these before they are guided to HslV for hydrolysis. This is ATP-dependent protease ATPase subunit HslU from Treponema denticola (strain ATCC 35405 / DSM 14222 / CIP 103919 / JCM 8153 / KCTC 15104).